Reading from the N-terminus, the 671-residue chain is DNA ligase (671 aa).

NAD(+)-binding positions include Asp32 to Asp36, Ser81 to Leu82, and Glu113. Residue Lys115 is the N6-AMP-lysine intermediate of the active site. Arg136, Glu173, Lys290, and Lys314 together coordinate NAD(+). Residues Cys408, Cys411, Cys426, and Cys432 each contribute to the Zn(2+) site. Positions Glu593–Ser671 constitute a BRCT domain.

This sequence belongs to the NAD-dependent DNA ligase family. LigA subfamily. The cofactor is Mg(2+). Requires Mn(2+) as cofactor.

The catalysed reaction is NAD(+) + (deoxyribonucleotide)n-3'-hydroxyl + 5'-phospho-(deoxyribonucleotide)m = (deoxyribonucleotide)n+m + AMP + beta-nicotinamide D-nucleotide.. DNA ligase that catalyzes the formation of phosphodiester linkages between 5'-phosphoryl and 3'-hydroxyl groups in double-stranded DNA using NAD as a coenzyme and as the energy source for the reaction. It is essential for DNA replication and repair of damaged DNA. In Escherichia coli O17:K52:H18 (strain UMN026 / ExPEC), this protein is DNA ligase.